Consider the following 427-residue polypeptide: UPF0229 protein YeaH (427 aa).

Positions 79–90 (NDHFVQNDRIER) are enriched in basic and acidic residues. Residues 79–110 (NDHFVQNDRIERPQGGGGGSGSGQGQASQDGE) form a disordered region. Gly residues predominate over residues 92 to 102 (QGGGGGSGSGQ).

Belongs to the UPF0229 family.

The polypeptide is UPF0229 protein YeaH (Escherichia coli O139:H28 (strain E24377A / ETEC)).